The chain runs to 249 residues: Hydantoin racemase (249 aa).

The protein belongs to the HyuE racemase family. In terms of assembly, homohexamer.

The enzyme catalyses a D-5-monosubstituted hydantoin = a L-5-monosubstituted hydantoin. The catalysed reaction is D-5-[2-(methylsulfanyl)ethyl]hydantoin = L-5-[2-(methysulfanyl)ethyl]hydantoin. It carries out the reaction D-5-benzylhydantoin = L-5-benzylhydantoin. It catalyses the reaction D-5-isopropylhydantoin = L-5-isopropylhydantoin. The enzyme catalyses D-5-isobutylhydantoin = L-5-isobutylhydantoin. Strongly inhibited by Cu(2+) and Zn(2+). Slightly stimulated by the addition of Mn(2+) or Co(2+), but also by metal-chelating agents such as EDTA or EGTA, indicating that the enzyme is not a metalloenzyme. Involved in the asymmetric conversion of racemic 5-substituted hydantoins to the corresponding L-amino acids. Catalyzes the racemization via enolization of D- and L-5-monosubstituted hydantoins. Is able to racemize 5-substituted hydantoins having aromatic or aliphatic substituents such as 5-(2-methylthioethyl)hydantoin, 5-isopropylhydantoin, 5-isobutylhydantoin and 5-benzylhydantoin. The protein is Hydantoin racemase of Pseudomonas sp. (strain NS671).